We begin with the raw amino-acid sequence, 1119 residues long: uncharacterized protein (1119 aa).

Positions 1–21 (MNNIYISLYIFFISYIIQLCF) are cleaved as a signal peptide. The stretch at 170–206 (NKKKLDKEKKKNVIELKEYLEDLKKRMFDMQKRLNDI) forms a coiled coil. 2 disordered regions span residues 606 to 627 (NNNTNNTNNNSNNNNNNNIFNN) and 782 to 905 (ASVQ…EHDE). Over residues 788 to 891 (DKGEDNNDND…EKDKSRDDNK (104 aa)) the composition is skewed to basic and acidic residues. Residues 890–920 (NKAQNNNSTDNEEHDEITEQIGFLKNHNQKY) adopt a coiled-coil conformation.

This is an uncharacterized protein from Plasmodium falciparum (isolate 3D7).